We begin with the raw amino-acid sequence, 229 residues long: Ribose-5-phosphate isomerase A (229 aa).

Residues threonine 28–threonine 31, aspartate 85–aspartate 88, and lysine 98–glycine 101 each bind substrate. Residue glutamate 107 is the Proton acceptor of the active site. Residue lysine 125 coordinates substrate.

This sequence belongs to the ribose 5-phosphate isomerase family. Homodimer.

The enzyme catalyses aldehydo-D-ribose 5-phosphate = D-ribulose 5-phosphate. It participates in carbohydrate degradation; pentose phosphate pathway; D-ribose 5-phosphate from D-ribulose 5-phosphate (non-oxidative stage): step 1/1. In terms of biological role, catalyzes the reversible conversion of ribose-5-phosphate to ribulose 5-phosphate. This is Ribose-5-phosphate isomerase A from Pyrococcus abyssi (strain GE5 / Orsay).